A 255-amino-acid chain; its full sequence is Hydroxyacylglutathione hydrolase (255 aa).

Positions 59, 61, 63, 64, 118, 144, and 182 each coordinate Zn(2+).

This sequence belongs to the metallo-beta-lactamase superfamily. Glyoxalase II family. Monomer. Requires Zn(2+) as cofactor.

It catalyses the reaction an S-(2-hydroxyacyl)glutathione + H2O = a 2-hydroxy carboxylate + glutathione + H(+). It participates in secondary metabolite metabolism; methylglyoxal degradation; (R)-lactate from methylglyoxal: step 2/2. Its function is as follows. Thiolesterase that catalyzes the hydrolysis of S-D-lactoyl-glutathione to form glutathione and D-lactic acid. This chain is Hydroxyacylglutathione hydrolase, found in Synechococcus sp. (strain WH7803).